A 1088-amino-acid chain; its full sequence is DNA polymerase II large subunit (1088 aa).

Belongs to the archaeal DNA polymerase II family. As to quaternary structure, heterodimer of a large subunit and a small subunit.

The catalysed reaction is DNA(n) + a 2'-deoxyribonucleoside 5'-triphosphate = DNA(n+1) + diphosphate. The enzyme catalyses Exonucleolytic cleavage in the 3'- to 5'-direction to yield nucleoside 5'-phosphates.. Possesses two activities: a DNA synthesis (polymerase) and an exonucleolytic activity that degrades single-stranded DNA in the 3'- to 5'-direction. Has a template-primer preference which is characteristic of a replicative DNA polymerase. The chain is DNA polymerase II large subunit (polC) from Thermoplasma volcanium (strain ATCC 51530 / DSM 4299 / JCM 9571 / NBRC 15438 / GSS1).